We begin with the raw amino-acid sequence, 401 residues long: NADH-dependent flavin oxidoreductase iliE (401 aa).

Residues 25–28 and Gln-107 each bind FMN; that span reads ASMS. 188–191 is a binding site for substrate; that stretch reads HAAH. 346–347 provides a ligand contact to FMN; sequence AR.

Belongs to the NADH:flavin oxidoreductase/NADH oxidase family.

In terms of biological role, NADH-dependent flavin oxidoreductase; part of the gene cluster that mediates the biosynthesis of ilicicolin H, a 4-hydroxy-2-pyridonealkaloid that has potent and broad antifungal activities by inhibiting the mitochondrial respiration chain. The biosynthesis of ilicicolin H starts with formation of the tetramic acid by the hybrid PKS-NRPS synthetase iliA with the partnering trans-enoyl reductase iliB since iliA lacks a designated enoylreductase (ER) domain. The cytochrome P450 monooxygenase iliC then catalyzes the ring expansion of the tetramate to the acyclic 2-pyridone. The pericyclase iliD further converts the acyclic 2-pyridone into 8-epi-ilicicolin H. 8-epi-ilicicolin H might then spontaneously convert to ilicicolin H since ilicicolin H is produced in the absence of the epimerase iliE, in contrast to what was observed for the Talaromyces variabilis ilicolin H biosynthetic pathway. This Hypocrea jecorina (strain QM6a) (Trichoderma reesei) protein is NADH-dependent flavin oxidoreductase iliE.